Here is a 116-residue protein sequence, read N- to C-terminus: Flagellar transcriptional regulator FlhD (116 aa).

It belongs to the FlhD family. Homodimer; disulfide-linked. Forms a heterohexamer composed of two FlhC and four FlhD subunits. Each FlhC binds a FlhD dimer, forming a heterotrimer, and a hexamer assembles by dimerization of two heterotrimers.

Its subcellular location is the cytoplasm. Its function is as follows. Functions in complex with FlhC as a master transcriptional regulator that regulates transcription of several flagellar and non-flagellar operons by binding to their promoter region. Activates expression of class 2 flagellar genes, including fliA, which is a flagellum-specific sigma factor that turns on the class 3 genes. Also regulates genes whose products function in a variety of physiological pathways. In Pantoea ananatis (strain LMG 20103), this protein is Flagellar transcriptional regulator FlhD.